Consider the following 243-residue polypeptide: Terpene cyclase atmB (243 aa).

7 consecutive transmembrane segments (helical) span residues 19 to 39, 48 to 68, 78 to 98, 112 to 132, 134 to 154, 169 to 189, and 205 to 225; these read IADV…VGMV, YGMA…YGLI, GVFL…IKFG, LPLI…ALAA, IGPA…LSVG, SYTL…SAWL, and LILW…VCFY.

Belongs to the paxB family.

It localises to the membrane. Its function is as follows. Terpene cyclase; part of the ATM2 gene cluster that mediates the biosynthesis of aflatrem, a tremorgenic mycotoxin with acute neurotoxic effects. Synthesis of geranylgeranyl diphosphate (GGPP) by AtmG (a GGPP synthase) precedes condensation of GGPP with indole 3-glycerol phosphate, followed by epoxidation and cyclization by AtmM (a FAD-dependent monooxygenase) and AtmC (a prenyltransferase) to produce paspaline. AtmB is also essential for paspaline production, but its exact role has not been identified yet. AtmP, a cytochrome P450 monooxygenase, subsequently converts paspaline to 13-desoxypaxilline via PC-M6 by removal of the C-30 methyl group and oxidation at C-10. AtmQ, a cytochrome P450 monooxygenase, then catalyzes the oxidation of 13-desoxypaxilline, first at C-7 to produce paspalicine and then at C-13 to form paspalinine. Finally, AtmD prenylates paspalinine to form aflatrem. The protein is Terpene cyclase atmB of Aspergillus flavus.